Here is a 331-residue protein sequence, read N- to C-terminus: Phenylalanine--tRNA ligase alpha subunit (331 aa).

Mg(2+) is bound at residue Glu252.

This sequence belongs to the class-II aminoacyl-tRNA synthetase family. Phe-tRNA synthetase alpha subunit type 1 subfamily. Tetramer of two alpha and two beta subunits. Mg(2+) serves as cofactor.

The protein localises to the cytoplasm. The catalysed reaction is tRNA(Phe) + L-phenylalanine + ATP = L-phenylalanyl-tRNA(Phe) + AMP + diphosphate + H(+). This is Phenylalanine--tRNA ligase alpha subunit from Xanthomonas euvesicatoria pv. vesicatoria (strain 85-10) (Xanthomonas campestris pv. vesicatoria).